Here is a 613-residue protein sequence, read N- to C-terminus: MCCWPLLLLWGLLPGTAAGGSGRTYPHRTLLDSEGKYWLGWSQRGSQIAFRLQVRTAGYVGFGFSPTGAMASADIVVGGVAHGRPYLQDYFTNANRELKKDAQQDYHLEYAMENSTHTIIEFTRELHTCDINDKSITDSTVRVIWAYHHEDAGEAGPKYHDSNRGTKSLRLLNPEKTSVLSTALPYFDLVNQDVPIPNKDTTYWCQMFKIPVFQEKHHVIKVEPVIQRGHESLVHHILLYQCSNNFNDSVLESGHECYHPNMPDAFLTCETVIFAWAIGGEGFSYPPHVGLSLGTPLDPHYVLLEVHYDNPTYEEGLIDNSGLRLFYTMDIRKYDAGVIEAGLWVSLFHTIPPGMPEFQSEGHCTLECLEEALEAEKPSGIHVFAVLLHAHLAGRGIRLRHFRKGKEMKLLAYDDDFDFNFQEFQYLKEEQTILPGDNLITECRYNTKDRAEMTWGGLSTRSEMCLSYLLYYPRINLTRCASIPDIMEQLQFIGVKEIYRPVTTWPFIIKSPKQYKNLSFMDAMNKFKWTKKEGLSFNKLVLSLPVNVRCSKTDNAEWSIQGMTALPPDIERPYKAEPLVCGTSSSSSLHRDFSINLLVCLLLLSCTLSTKSL.

Positions 1–19 are cleaved as a signal peptide; that stretch reads MCCWPLLLLWGLLPGTAAG. Residues 20 to 592 are Lumenal-facing; that stretch reads GSGRTYPHRT…TSSSSSLHRD (573 aa). A DOMON domain is found at 35-148; sequence GKYWLGWSQR…STVRVIWAYH (114 aa). Asn-114 carries N-linked (GlcNAc...) asparagine glycosylation. Tyr-203 is a catalytic residue. Intrachain disulfides connect Cys-205–Cys-257 and Cys-242–Cys-269. The Cu cation site is built by His-235 and His-236. The N-linked (GlcNAc...) asparagine glycan is linked to Asn-247. Cu cation contacts are provided by His-307, His-389, His-391, and Met-464. 3 disulfide bridges follow: Cys-364–Cys-480, Cys-368–Cys-550, and Cys-443–Cys-465. His-389 is a catalytic residue. Residues Asn-476 and Asn-517 are each glycosylated (N-linked (GlcNAc...) asparagine). Residues 593-613 form a helical membrane-spanning segment; sequence FSINLLVCLLLLSCTLSTKSL.

This sequence belongs to the copper type II ascorbate-dependent monooxygenase family. It depends on Cu(2+) as a cofactor. N-glycosylated. Highly expressed in lung, kidney, brain and spinal cord.

Its subcellular location is the endoplasmic reticulum membrane. This chain is DBH-like monooxygenase protein 1 (MOXD1), found in Homo sapiens (Human).